The following is a 283-amino-acid chain: Phosphate import ATP-binding protein PstB (283 aa).

The segment covering 1–20 (MAQTLAQTKQISQSHTFDVS) has biased composition (polar residues). Residues 1-32 (MAQTLAQTKQISQSHTFDVSQSHHKTPDDTNS) form a disordered region. One can recognise an ABC transporter domain in the interval 37–278 (YSTQNLDLWY…PSNKKTEDYI (242 aa)). An ATP-binding site is contributed by 69–76 (GPSGCGKS).

It belongs to the ABC transporter superfamily. Phosphate importer (TC 3.A.1.7) family. As to quaternary structure, the complex is composed of two ATP-binding proteins (PstB), two transmembrane proteins (PstC and PstA) and a solute-binding protein (PstS).

The protein localises to the cell membrane. The enzyme catalyses phosphate(out) + ATP + H2O = ADP + 2 phosphate(in) + H(+). Functionally, part of the ABC transporter complex PstSACB involved in phosphate import. Responsible for energy coupling to the transport system. The sequence is that of Phosphate import ATP-binding protein PstB from Staphylococcus aureus (strain USA300).